The chain runs to 182 residues: Dynactin subunit 5 (182 aa).

N-acetylmethionine is present on Met1.

It belongs to the dynactin subunits 5/6 family. Dynactin subunit 5 subfamily. In terms of assembly, subunit of dynactin, a multiprotein complex part of a tripartite complex with dynein and a adapter, such as BICDL1, BICD2 or HOOK3. The dynactin complex is built around ACTR1A/ACTB filament and consists of an actin-related filament composed of a shoulder domain, a pointed end and a barbed end. Its length is defined by its flexible shoulder domain. The soulder is composed of 2 DCTN1 subunits, 4 DCTN2 and 2 DCTN3. The 4 DCNT2 (via N-terminus) bind the ACTR1A filament and act as molecular rulers to determine the length. The pointed end is important for binding dynein-dynactin cargo adapters. Consists of 4 subunits: ACTR10, DCNT4, DCTN5 and DCTN6. Within the complex DCTN6 forms a heterodimer with DCTN5. The barbed end is composed of a CAPZA1:CAPZB heterodimers, which binds ACTR1A/ACTB filament and dynactin and stabilizes dynactin. Interacts with N4BP2L1.

Its subcellular location is the cytoplasm. It localises to the cytoskeleton. It is found in the chromosome. The protein localises to the centromere. The protein resides in the kinetochore. Functionally, part of the dynactin complex that activates the molecular motor dynein for ultra-processive transport along microtubules. This chain is Dynactin subunit 5, found in Homo sapiens (Human).